A 292-amino-acid polypeptide reads, in one-letter code: NAC domain-containing protein 105 (292 aa).

Residues 12-162 form the NAC domain; it reads IPPGFRFHPT…GWVVCRAFKK (151 aa). Residues 112 to 168 mediate DNA binding; sequence IGMRKTLVFYRGRAPNGQKSDWIIHEYYSLESHQNSPPQEEGWVVCRAFKKRTTIPT. A compositionally biased stretch (polar residues) spans 237–259; that stretch reads LPQLESPSLPSEITPHSTTFSEN. The tract at residues 237 to 269 is disordered; it reads LPQLESPSLPSEITPHSTTFSENSSRKDDMSSE. Over residues 260-269 the composition is skewed to basic and acidic residues; it reads SSRKDDMSSE.

It belongs to the plant vascular related NAC-domain protein family. In terms of assembly, interacts with NAC030/VND7. As to expression, detected in root protoxylem and metaxylem poles and in vessels of protoxylems, outermost metaxylems, inner metaxylems, shoots and hypocotyls. Expressed in roots, hypocotyls, cotyledons and leaves. Present in developing xylems. Present in root developing xylems. Specifically expressed in vessels but not in interfascicular fibers in stems.

It is found in the nucleus. In terms of biological role, transcription activator that binds to the secondary wall NAC binding element (SNBE), 5'-(T/A)NN(C/T)(T/C/G)TNNNNNNNA(A/C)GN(A/C/T)(A/T)-3', in the promoter of target genes. Involved in xylem formation by promoting the expression of secondary wall-associated transcription factors and of genes involved in secondary wall biosynthesis and programmed cell death, genes driven by the secondary wall NAC binding element (SNBE). Triggers thickening of secondary walls. The chain is NAC domain-containing protein 105 from Arabidopsis thaliana (Mouse-ear cress).